Consider the following 337-residue polypeptide: Cytidine deaminase 2 (337 aa).

CMP/dCMP-type deaminase domains follow at residues 43–164 (TDPI…FSSL) and 199–320 (LDCS…LKYL). 84-86 (NVD) provides a ligand contact to substrate. H97 lines the Zn(2+) pocket. E99 acts as the Proton donor in catalysis. Zn(2+)-binding residues include C132 and C135.

Belongs to the cytidine and deoxycytidylate deaminase family. Homodimer. The cofactor is Zn(2+).

The enzyme catalyses cytidine + H2O + H(+) = uridine + NH4(+). The catalysed reaction is 2'-deoxycytidine + H2O + H(+) = 2'-deoxyuridine + NH4(+). In terms of biological role, this enzyme scavenges exogenous and endogenous cytidine and 2'-deoxycytidine for UMP synthesis. This is Cytidine deaminase 2 (CDA2) from Arabidopsis thaliana (Mouse-ear cress).